A 421-amino-acid polypeptide reads, in one-letter code: Cyclin-A2 (421 aa).

The residue at position 1 (Met-1) is an N-acetylmethionine. The disordered stretch occupies residues 1–60 (MPGSSRQSGREAGSALLSLQQEDQENVNPEKAAPDQRARAALKTGNARGNAPQQRLKARR). Ser-5 carries the phosphoserine modification.

It belongs to the cyclin family. Cyclin AB subfamily. In terms of assembly, interacts with the CDK1 and CDK2 protein kinases to form serine/threonine kinase holoenzyme complexes. Interacts with CDK1 (hyperphosphorylated form in G1 and underphosphorylated forms in S and G2). Interacts with CDK2; the interaction increases from G1 to G2. Interacts (associated with CDK2 but not with CDK1) with SCAPER; regulates the activity of CCNA2/CDK2 by transiently maintaining CCNA2 in the cytoplasm. Forms a ternary complex with CDK2 and CDKN1B; CDKN1B inhibits the kinase activity of CDK2 through conformational rearrangements. Interacts with INCA1. In terms of processing, polyubiquitinated via 'Lys-11'-linked ubiquitin by the anaphase-promoting complex (APC/C), leading to its degradation by the proteasome. Deubiquitinated and stabilized by USP37 enables entry into S phase. Ubiquitinated during the G1 phase by the SCF(FBXO31) complex, leading to its proteasomal degradation.

The protein localises to the nucleus. The protein resides in the cytoplasm. Cyclin which controls both the G1/S and the G2/M transition phases of the cell cycle. Functions through the formation of specific serine/threonine kinase holoenzyme complexes with the cyclin-dependent protein kinases CDK1 and CDK2. The cyclin subunit confers the substrate specificity of these complexes and differentially interacts with and activates CDK1 and CDK2 throughout the cell cycle. The sequence is that of Cyclin-A2 from Mesocricetus auratus (Golden hamster).